The following is a 313-amino-acid chain: Putative S-adenosyl-L-methionine-dependent methyltransferase MAV_4573 (313 aa).

S-adenosyl-L-methionine contacts are provided by residues Asp-129 and 158 to 159 (DL).

This sequence belongs to the UPF0677 family.

In terms of biological role, exhibits S-adenosyl-L-methionine-dependent methyltransferase activity. In Mycobacterium avium (strain 104), this protein is Putative S-adenosyl-L-methionine-dependent methyltransferase MAV_4573.